Here is a 243-residue protein sequence, read N- to C-terminus: DNA repair protein RecO (243 aa).

It belongs to the RecO family.

In terms of biological role, involved in DNA repair and RecF pathway recombination. The sequence is that of DNA repair protein RecO from Beutenbergia cavernae (strain ATCC BAA-8 / DSM 12333 / CCUG 43141 / JCM 11478 / NBRC 16432 / NCIMB 13614 / HKI 0122).